The sequence spans 248 residues: Phosphatidylserine decarboxylase proenzyme (248 aa).

Ser206 functions as the Schiff-base intermediate with substrate; via pyruvic acid in the catalytic mechanism. Ser206 carries the pyruvic acid (Ser); by autocatalysis modification.

This sequence belongs to the phosphatidylserine decarboxylase family. PSD-A subfamily. In terms of assembly, heterodimer of a large membrane-associated beta subunit and a small pyruvoyl-containing alpha subunit. Requires pyruvate as cofactor. Post-translationally, is synthesized initially as an inactive proenzyme. Formation of the active enzyme involves a self-maturation process in which the active site pyruvoyl group is generated from an internal serine residue via an autocatalytic post-translational modification. Two non-identical subunits are generated from the proenzyme in this reaction, and the pyruvate is formed at the N-terminus of the alpha chain, which is derived from the carboxyl end of the proenzyme. The post-translation cleavage follows an unusual pathway, termed non-hydrolytic serinolysis, in which the side chain hydroxyl group of the serine supplies its oxygen atom to form the C-terminus of the beta chain, while the remainder of the serine residue undergoes an oxidative deamination to produce ammonia and the pyruvoyl prosthetic group on the alpha chain.

The protein localises to the cell membrane. The enzyme catalyses a 1,2-diacyl-sn-glycero-3-phospho-L-serine + H(+) = a 1,2-diacyl-sn-glycero-3-phosphoethanolamine + CO2. The protein operates within phospholipid metabolism; phosphatidylethanolamine biosynthesis; phosphatidylethanolamine from CDP-diacylglycerol: step 2/2. Its function is as follows. Catalyzes the formation of phosphatidylethanolamine (PtdEtn) from phosphatidylserine (PtdSer). The chain is Phosphatidylserine decarboxylase proenzyme from Nitrobacter hamburgensis (strain DSM 10229 / NCIMB 13809 / X14).